Reading from the N-terminus, the 354-residue chain is 3-dehydroquinate synthase (354 aa).

NAD(+)-binding positions include 69-74 (DGEAEK), 103-107 (GVIGD), 127-128 (TS), lysine 140, and lysine 149. 3 residues coordinate Zn(2+): glutamate 182, histidine 245, and histidine 262.

The protein belongs to the sugar phosphate cyclases superfamily. Dehydroquinate synthase family. Requires Co(2+) as cofactor. Zn(2+) is required as a cofactor. NAD(+) serves as cofactor.

The protein localises to the cytoplasm. It carries out the reaction 7-phospho-2-dehydro-3-deoxy-D-arabino-heptonate = 3-dehydroquinate + phosphate. Its pathway is metabolic intermediate biosynthesis; chorismate biosynthesis; chorismate from D-erythrose 4-phosphate and phosphoenolpyruvate: step 2/7. In terms of biological role, catalyzes the conversion of 3-deoxy-D-arabino-heptulosonate 7-phosphate (DAHP) to dehydroquinate (DHQ). The polypeptide is 3-dehydroquinate synthase (Colwellia psychrerythraea (strain 34H / ATCC BAA-681) (Vibrio psychroerythus)).